We begin with the raw amino-acid sequence, 525 residues long: Lysine--tRNA ligase (525 aa).

Mg(2+) is bound by residues glutamate 419 and glutamate 426.

The protein belongs to the class-II aminoacyl-tRNA synthetase family. As to quaternary structure, homodimer. The cofactor is Mg(2+).

It localises to the cytoplasm. The catalysed reaction is tRNA(Lys) + L-lysine + ATP = L-lysyl-tRNA(Lys) + AMP + diphosphate. The chain is Lysine--tRNA ligase (lysS) from Deinococcus radiodurans (strain ATCC 13939 / DSM 20539 / JCM 16871 / CCUG 27074 / LMG 4051 / NBRC 15346 / NCIMB 9279 / VKM B-1422 / R1).